The chain runs to 215 residues: Ependymin-1 (215 aa).

Residues 1–20 form the signal peptide; sequence MHTVKLLCVVFSCLCAVAWA. Asn71 and Asn94 each carry an N-linked (GlcNAc...) asparagine glycan.

This sequence belongs to the ependymin family. As to quaternary structure, forms disulfide-linked dimers. In terms of processing, different glycosylation variants are known as EPD-beta and EPD-gamma. Binds calcium through the terminal sialic acids. In terms of tissue distribution, EPDs are synthesized in the meninx and secreted in the cerebrospinal fluid.

It localises to the secreted. In terms of biological role, may play a role in neural plasticity. May be involved during axon regeneration. This is Ependymin-1 (epd1) from Carassius auratus (Goldfish).